The primary structure comprises 319 residues: ATP-dependent 6-phosphofructokinase (319 aa).

Residue Gly-11 participates in ATP binding. 21–25 is an ADP binding site; sequence RAVVR. ATP contacts are provided by residues 72–73 and 102–105; these read RC and GDGS. Asp-103 serves as a coordination point for Mg(2+). 125-127 contacts substrate; that stretch reads TID. Residue Asp-127 is the Proton acceptor of the active site. Arg-154 provides a ligand contact to ADP. Residues Arg-162 and 169-171 each bind substrate; that span reads MGR. ADP-binding positions include 185–187, Arg-211, and 213–215; these read GAE and KLH. Residues Glu-222, Arg-243, and 249–252 contribute to the substrate site; that span reads HLQR.

It belongs to the phosphofructokinase type A (PFKA) family. ATP-dependent PFK group I subfamily. Prokaryotic clade 'B1' sub-subfamily. In terms of assembly, homotetramer. Requires Mg(2+) as cofactor.

The protein resides in the cytoplasm. It carries out the reaction beta-D-fructose 6-phosphate + ATP = beta-D-fructose 1,6-bisphosphate + ADP + H(+). It participates in carbohydrate degradation; glycolysis; D-glyceraldehyde 3-phosphate and glycerone phosphate from D-glucose: step 3/4. With respect to regulation, allosterically activated by ADP and other diphosphonucleosides, and allosterically inhibited by phosphoenolpyruvate. Its function is as follows. Catalyzes the phosphorylation of D-fructose 6-phosphate to fructose 1,6-bisphosphate by ATP, the first committing step of glycolysis. The polypeptide is ATP-dependent 6-phosphofructokinase (Clostridium novyi (strain NT)).